Reading from the N-terminus, the 124-residue chain is Protein BEX3 (124 aa).

Residues M1–L56 are disordered. Residues N42–A53 show a composition bias toward basic residues. The segment at E81–L106 is interaction with p75NTR/NGFR. Positions E81–P124 are interaction with 14-3-3 epsilon. Positions I90 to R100 match the Nuclear export signal motif. A his cluster region spans residues H113–H117. C121 provides a ligand contact to Zn(2+).

It belongs to the BEX family. Self-associates. Binds to the DEATH domain of p75NTR/NGFR. Interacts with 14-3-3 epsilon (YWHAE). Interacts with DIABLO/SMAC. Ubiquitinated. Degraded by the proteasome. In terms of tissue distribution, widely expressed.

The protein localises to the nucleus. It is found in the cytoplasm. The protein resides in the cytosol. Functionally, may be a signaling adapter molecule involved in NGFR/p75NTR-mediated apoptosis induced by NGF. Plays a role in zinc-triggered neuronal death. In absence of reductive stress, acts as a pseudosubstrate for the CRL2(FEM1B) complex: associates with FEM1B via zinc, thereby preventing association between FEM1B and its substrates. In Mus musculus (Mouse), this protein is Protein BEX3.